Here is a 752-residue protein sequence, read N- to C-terminus: Complement C2 (752 aa).

The N-terminal stretch at 1–20 (MGPLMVLFCLLFLYPGLADS) is a signal peptide. 3 Sushi domains span residues 22–86 (PSCP…VCKP), 87–146 (VRCP…VCDN), and 149–206 (GHCP…ICRQ). 6 cysteine pairs are disulfide-bonded: cysteine 24/cysteine 64, cysteine 51/cysteine 84, cysteine 89/cysteine 131, cysteine 117/cysteine 144, cysteine 151/cysteine 191, and cysteine 177/cysteine 204. N-linked (GlcNAc...) asparagine glycosylation occurs at asparagine 29. N-linked (GlcNAc...) asparagine glycosylation is present at asparagine 112. The 199-residue stretch at 254-452 (NLYLLLDCSQ…KALHQVFEHM (199 aa)) folds into the VWFA domain. An MIDAS-like motif motif is present at residues 260-264 (DCSQS). Mg(2+) contacts are provided by serine 262 and serine 264. Mn(2+) is bound by residues serine 262 and serine 264. Asparagine 290 and asparagine 333 each carry an N-linked (GlcNAc...) asparagine glycan. Threonine 337 is a Mg(2+) binding site. Threonine 337 is a Mn(2+) binding site. Disulfide bonds link cysteine 463/cysteine 581, cysteine 492/cysteine 508, and cysteine 584/cysteine 600. Residues 464–744 (GVGNMSANAS…MQPWLRQHLG (281 aa)) enclose the Peptidase S1 domain. N-linked (GlcNAc...) asparagine glycans are attached at residues asparagine 467 and asparagine 471. Catalysis depends on charge relay system residues histidine 507 and aspartate 561. N-linked (GlcNAc...) asparagine glycosylation occurs at asparagine 621. 2 cysteine pairs are disulfide-bonded: cysteine 638-cysteine 665 and cysteine 675-cysteine 705. A glycan (N-linked (GlcNAc...) (complex) asparagine) is linked at asparagine 651. Serine 679 (charge relay system) is an active-site residue.

This sequence belongs to the peptidase S1 family. As to quaternary structure, serine protease component of the C3 convertase, also named C4bC2b, composed of the serine protease complement C2b and complement C4b. Serine protease component of the C5 convertase, also named C4bC2bC3b, composed of the serine protease complement C2b, complement C3b, as well as complement C4b. In terms of assembly, (Microbial infection) Interacts with Schistosoma haematobium TOR (via N-terminal extracellular domain). This results in inhibition of the classical and lectin pathway of complement activation, probably due to interference with binding of C2a to C4b such that C3 convertase cannot be formed. This infers resistance to complement-mediated cell lysis, allowing parasite survival and infection. Mg(2+) is required as a cofactor. It depends on Mn(2+) as a cofactor. Post-translationally, cleaved and activated by different proteases depending on the complement pathway to generate complement C2a and serine protease complement C2b chains. Cleaved and activated by C1S following activation by the classical complement system. Cleaved and activated by MASP2 following activation by the lectin complement system. Cleaved and activated by GZMK following activation by the GZMK complement system.

It is found in the secreted. The protein resides in the cell surface. The catalysed reaction is Selective cleavage of Arg-|-Ser bond in complement component C3 alpha-chain to form C3a and C3b, and Arg-|-Xaa bond in complement component C5 alpha-chain to form C5a and C5b.. Precursor of the catalytic component of the C3 and C5 convertase complexes, which are part of the complement pathway, a cascade of proteins that leads to phagocytosis and breakdown of pathogens and signaling that strengthens the adaptive immune system. Component C2 is part of the classical, lectin and GZMK complement systems. In terms of biological role, catalytic component of the complement C3 and C5 convertase complexes. Following complement activation, recruited to the surface of pathogens by complement C4b opsonin to form the C3 convertase, or C3b and C4b opsonins to form the C5 convertase. As part of the C3 convertase, cleaves and activate C3 into C3a anaphylatoxin and C3b opsonin, the next components of the complement pathways. As part of the C5 convertase, cleaves and activate C5 into C5a anaphylatoxin and C5b component of the membrane attack complex. This chain is Complement C2, found in Homo sapiens (Human).